Here is a 209-residue protein sequence, read N- to C-terminus: Probable L-serine dehydratase, alpha chain (209 aa).

It belongs to the iron-sulfur dependent L-serine dehydratase family. As to quaternary structure, heterodimer of an alpha chain and a beta chain. Requires [4Fe-4S] cluster as cofactor.

It carries out the reaction L-serine = pyruvate + NH4(+). Its pathway is carbohydrate biosynthesis; gluconeogenesis. The chain is Probable L-serine dehydratase, alpha chain (sdhA) from Latilactobacillus sakei (Lactobacillus sakei).